Here is a 121-residue protein sequence, read N- to C-terminus: Protein yippee-like At3g55890 (121 aa).

The 98-residue stretch at 12–109 (NIYICKLCKT…LELYKISGPH (98 aa)) folds into the Yippee domain. Zn(2+) contacts are provided by cysteine 16, cysteine 19, cysteine 72, and cysteine 75.

This sequence belongs to the yippee family.

This chain is Protein yippee-like At3g55890, found in Arabidopsis thaliana (Mouse-ear cress).